The sequence spans 83 residues: Small ribosomal subunit protein bS16 (83 aa).

The protein belongs to the bacterial ribosomal protein bS16 family.

The polypeptide is Small ribosomal subunit protein bS16 (Azoarcus sp. (strain BH72)).